We begin with the raw amino-acid sequence, 291 residues long: Presqualene diphosphate synthase (291 aa).

A disordered region spans residues 1-23 (MTSAMKKIQPEAFSEKSSDSQAS).

Belongs to the phytoene/squalene synthase family. HpnD subfamily.

The catalysed reaction is 2 (2E,6E)-farnesyl diphosphate = presqualene diphosphate + diphosphate. Its pathway is secondary metabolite biosynthesis; hopanoid biosynthesis. Its function is as follows. Involved in the biosynthesis of the hopanoid precursor squalene (SQ) from farnesyl diphosphate (FPP). Catalyzes the first step, the formation of presqualene diphosphate (PSPP) from two molecules of FPP. In Zymomonas mobilis subsp. mobilis (strain ATCC 31821 / ZM4 / CP4), this protein is Presqualene diphosphate synthase.